Consider the following 166-residue polypeptide: Large ribosomal subunit protein uL10 (166 aa).

The protein belongs to the universal ribosomal protein uL10 family. Part of the ribosomal stalk of the 50S ribosomal subunit. The N-terminus interacts with L11 and the large rRNA to form the base of the stalk. The C-terminus forms an elongated spine to which L12 dimers bind in a sequential fashion forming a multimeric L10(L12)X complex.

Its function is as follows. Forms part of the ribosomal stalk, playing a central role in the interaction of the ribosome with GTP-bound translation factors. The chain is Large ribosomal subunit protein uL10 from Shewanella denitrificans (strain OS217 / ATCC BAA-1090 / DSM 15013).